The primary structure comprises 328 residues: dTDP-4-dehydrorhamnose 3,5-epimerase (328 aa).

Residues R23, E28, 46 to 48 (QEN), and R58 each bind substrate. Residue H61 is the Proton acceptor of the active site. Substrate is bound by residues K70 and H117. The Proton donor role is filled by Y130. Substrate is bound by residues E141 and K166.

Belongs to the dTDP-4-dehydrorhamnose 3,5-epimerase family. As to quaternary structure, homodimer.

The enzyme catalyses dTDP-4-dehydro-6-deoxy-alpha-D-glucose = dTDP-4-dehydro-beta-L-rhamnose. Its pathway is carbohydrate biosynthesis; dTDP-L-rhamnose biosynthesis. It functions in the pathway bacterial outer membrane biogenesis; LPS O-antigen biosynthesis. Functionally, catalyzes the epimerization of the C3' and C5'positions of dTDP-6-deoxy-D-xylo-4-hexulose, forming dTDP-6-deoxy-L-lyxo-4-hexulose. This Neisseria gonorrhoeae protein is dTDP-4-dehydrorhamnose 3,5-epimerase (rfbC).